Here is a 627-residue protein sequence, read N- to C-terminus: CTP synthase (627 aa).

One can recognise a Glutamine amidotransferase type-1 domain in the interval 300–554 (CIAVVGKYTK…LASVDRLNQY (255 aa)). Catalysis depends on for GATase activity residues C399, H526, and E528. S567, S570, S571, and S588 each carry phosphoserine. T595 carries the post-translational modification Phosphothreonine. Residues 599–613 (GISKSCNGSISTSDS) are compositionally biased toward polar residues. The tract at residues 599-627 (GISKSCNGSISTSDSEGACGGVDPTNGHK) is disordered.

This sequence belongs to the CTP synthase family. In ovary, expressed in oocytes, follicle cells and nurse cells. Also expressed in larval and adult testis (at protein level). In larvae, expressed in lymph gland, salivary gland, regions of the midgut, testis, optical lobe and trachea. Isoform 1 is expressed in adult testis, ovary, accessory gland and head. Isoform 2 is weakly expressed in ovary.

It is found in the cytoplasm. The enzyme catalyses UTP + L-glutamine + ATP + H2O = CTP + L-glutamate + ADP + phosphate + 2 H(+). The protein operates within pyrimidine metabolism; CTP biosynthesis via de novo pathway; CTP from UDP: step 2/2. Catalyzes the ATP-dependent amination of UTP to CTP with either L-glutamine or ammonia as the source of nitrogen. Constitutes the rate-limiting enzyme in the synthesis of cytosine nucleotides. In terms of biological role, required for assembly of cytoophidium in female germline cells. In nurse cells, CTPsyn filament assembly in the cytoophidium is regulated by Ack kinase which may thereby contribute to the control of CTP production at specific stages of oogenesis and development of the nurse cell membrane. This is CTP synthase from Drosophila melanogaster (Fruit fly).